A 529-amino-acid chain; its full sequence is Putative inorganic phosphate cotransporter (529 aa).

The next 8 membrane-spanning stretches (helical) occupy residues 37–57 (FATR…AYVM), 110–130 (YILS…GILA), 148–168 (VFAF…LCAV), 202–222 (AVYA…GLLA), 232–252 (SIFY…LIFV), 338–358 (LPYL…DWMI), 429–449 (FLMS…PIAA), and 466–486 (IVFF…NIFG). The tract at residues 495 to 529 (NPEDDEQKPALQTTVTTSPARLSNGSTAPAAISSS) is disordered. Polar residues predominate over residues 504–529 (ALQTTVTTSPARLSNGSTAPAAISSS).

This sequence belongs to the major facilitator superfamily. Sodium/anion cotransporter family.

The protein localises to the membrane. Functionally, may be an inorganic phosphate cotransporter. The sequence is that of Putative inorganic phosphate cotransporter (Picot) from Drosophila melanogaster (Fruit fly).